Consider the following 221-residue polypeptide: MGTVVAKLLLPTLSSLAFLPTVSIATKRRFYMEAMVYLFTMFFVAFSHACDGPGLSVLCFMRRDILEYFSIYGTALSMWVSLMALADFDEPQRSTFTMLGVLTIAVRTFHDRWGYGVYSGPIGTATLIIAVKWLKKMKEKKGLYPDKSIYTQQIGPGLCFGALALMLRFFFEEWDYTYVHSFYHCALAMSFVLLLPKVNKKAGNAGAPAKLTFSTLCCTCV.

Residues 1-3 lie on the Extracellular side of the membrane; the sequence is MGT. Residues 4–24 traverse the membrane as a helical segment; the sequence is VVAKLLLPTLSSLAFLPTVSI. Topologically, residues 25 to 29 are cytoplasmic; that stretch reads ATKRR. Residues 30-50 form a helical membrane-spanning segment; sequence FYMEAMVYLFTMFFVAFSHAC. The Extracellular segment spans residues 51–64; that stretch reads DGPGLSVLCFMRRD. The helical transmembrane segment at 65–85 threads the bilayer; it reads ILEYFSIYGTALSMWVSLMAL. The Cytoplasmic segment spans residues 86-93; that stretch reads ADFDEPQR. The chain crosses the membrane as a helical span at residues 94–110; the sequence is STFTMLGVLTIAVRTFH. The Extracellular segment spans residues 111–113; that stretch reads DRW. Residues 114–134 form a helical membrane-spanning segment; it reads GYGVYSGPIGTATLIIAVKWL. At 135 to 153 the chain is on the cytoplasmic side; the sequence is KKMKEKKGLYPDKSIYTQQ. A helical membrane pass occupies residues 154-174; sequence IGPGLCFGALALMLRFFFEEW. A topological domain (extracellular) is located at residue D175. A helical membrane pass occupies residues 176–196; sequence YTYVHSFYHCALAMSFVLLLP. The Cytoplasmic segment spans residues 197–221; it reads KVNKKAGNAGAPAKLTFSTLCCTCV. S-palmitoyl cysteine attachment occurs at residues C217 and C218.

Belongs to the TMEM8 family. In terms of assembly, interacts with MYMX. In terms of processing, palmitoylated at the C-terminus; palmitoylation promotes localization to the Golgi apparatus. Specifically expressed in skeletal muscle during embryogenesis and adult muscle regeneration.

Its subcellular location is the cell membrane. It is found in the golgi apparatus membrane. In terms of biological role, myoblast-specific protein that mediates myoblast fusion, an essential step for the formation of multi-nucleated muscle fibers. Actively participates in the membrane fusion reaction by mediating the mixing of cell membrane lipids (hemifusion) upstream of MYMX. Acts independently of MYMX. Involved in skeletal muscle regeneration in response to injury by mediating the fusion of satellite cells, a population of muscle stem cells, with injured myofibers. Also involved in skeletal muscle hypertrophy, probably by mediating the fusion of satellite cells with myofibers. This chain is Protein myomaker, found in Mus musculus (Mouse).